A 407-amino-acid chain; its full sequence is Carbamoyl phosphate synthase small chain (407 aa).

The tract at residues 1-205 (MTETTPKTAP…LQDGYGEQDA (205 aa)) is CPSase. L-glutamine contacts are provided by serine 60, glycine 257, and glycine 259. Residues 209 to 397 (HVVALDFGVK…INLIRERKGQ (189 aa)) form the Glutamine amidotransferase type-1 domain. Cysteine 286 functions as the Nucleophile in the catalytic mechanism. Leucine 287, glutamine 290, asparagine 328, glycine 330, and phenylalanine 331 together coordinate L-glutamine. Catalysis depends on residues histidine 370 and glutamate 372.

It belongs to the CarA family. Composed of two chains; the small (or glutamine) chain promotes the hydrolysis of glutamine to ammonia, which is used by the large (or ammonia) chain to synthesize carbamoyl phosphate. Tetramer of heterodimers (alpha,beta)4.

It carries out the reaction hydrogencarbonate + L-glutamine + 2 ATP + H2O = carbamoyl phosphate + L-glutamate + 2 ADP + phosphate + 2 H(+). The enzyme catalyses L-glutamine + H2O = L-glutamate + NH4(+). It functions in the pathway amino-acid biosynthesis; L-arginine biosynthesis; carbamoyl phosphate from bicarbonate: step 1/1. Its pathway is pyrimidine metabolism; UMP biosynthesis via de novo pathway; (S)-dihydroorotate from bicarbonate: step 1/3. Small subunit of the glutamine-dependent carbamoyl phosphate synthetase (CPSase). CPSase catalyzes the formation of carbamoyl phosphate from the ammonia moiety of glutamine, carbonate, and phosphate donated by ATP, constituting the first step of 2 biosynthetic pathways, one leading to arginine and/or urea and the other to pyrimidine nucleotides. The small subunit (glutamine amidotransferase) binds and cleaves glutamine to supply the large subunit with the substrate ammonia. The protein is Carbamoyl phosphate synthase small chain of Brucella suis (strain ATCC 23445 / NCTC 10510).